Reading from the N-terminus, the 358-residue chain is MARVLLLSLVFLAILLPALAACPQNCHCHGDLQHVICDKVGLQKIPKVSETTKLLNLQRNNFPVLAANSFRTVPNLVSLHLQHCNIREVAAGAFRGLKQLIYLYLSHNDIRVLRAGAFDDLTELTYLYLDHNKVSELPRGLLSPLVNLFILQLNNNKIRELRAGAFQGAKDLRWLYLSENALTSLHPGSLDDVENLAKFHLDRNQLSSYPSAALSKLRVVEELKLSHNPLKSIPDNAFQSFGRYLETLWLDNTNLEKFSDAAFAGVTTLKHVHLENNRLNQLPSTFPFDNLETLTLTNNPWKCTCQLRGLRRWLEAKTSRPDATCSSPAKFKGQRIRDTDALRSCKSPTKRSKKAGRH.

An N-terminal signal peptide occupies residues 1–20 (MARVLLLSLVFLAILLPALA). The 30-residue stretch at 21-50 (ACPQNCHCHGDLQHVICDKVGLQKIPKVSE) folds into the LRRNT domain. A disulfide bridge connects residues Cys-22 and Cys-37. 10 LRR repeats span residues 51-72 (TTKLLNLQRNNFPVLAANSFRT), 75-96 (NLVSLHLQHCNIREVAAGAFRG), 99-120 (QLIYLYLSHNDIRVLRAGAFDD), 123-144 (ELTYLYLDHNKVSELPRGLLSP), 147-168 (NLFILQLNNNKIRELRAGAFQG), 171-192 (DLRWLYLSENALTSLHPGSLDD), 195-216 (NLAKFHLDRNQLSSYPSAALSK), 219-240 (VVEELKLSHNPLKSIPDNAFQS), 244-265 (YLETLWLDNTNLEKFSDAAFAG), and 268-289 (TLKHVHLENNRLNQLPSTFPFD). Ser-143 carries O-linked (GalNAc...) serine glycosylation. Residues 299 to 347 (NPWKCTCQLRGLRRWLEAKTSRPDATCSSPAKFKGQRIRDTDALRSCKS) form the LRRCT domain. Disulfide bonds link Cys-303-Cys-345 and Cys-305-Cys-325. Positions 321-358 (PDATCSSPAKFKGQRIRDTDALRSCKSPTKRSKKAGRH) are disordered. The span at 348 to 358 (PTKRSKKAGRH) shows a compositional bias: basic residues.

The protein belongs to the small leucine-rich proteoglycan (SLRP) family. SLRP class IV subfamily. Mostly monomeric. As to expression, present in femoral head and rib cartilage, as well as in tendon. Detected in bone marrow.

The protein resides in the secreted. The protein localises to the extracellular space. It is found in the extracellular matrix. In terms of biological role, promotes attachment of chondrocytes, fibroblasts, and osteoblasts. This binding is mediated (at least for chondrocytes and fibroblasts) by the integrin alpha(2)beta(1). May play an important role in the regulation of chondrocyte growth and proliferation. The polypeptide is Chondroadherin (Chad) (Rattus norvegicus (Rat)).